The sequence spans 328 residues: NADH:quinone reductase (328 aa).

Residues 22–24 (GMQ), Thr75, Lys124, Ala150, 178–180 (SGG), and 201–202 (GT) each bind FMN.

The protein belongs to the nitronate monooxygenase family. Monomer. FMN serves as cofactor.

It catalyses the reaction a quinone + NADH + H(+) = a quinol + NAD(+). Catalyzes the NADH-dependent reduction of a broad spectrum of quinone substrates, generating the corresponding hydroquinones. Highly prefers NADH to NADPH as a reducing substrate. Also displays a small NADH oxidase activity. Does not exhibit nitronate monooxygenase activity; is inactive against propionate 3-nitronate, 3-nitropropionate, nitroethane, 1-nitropropane, 2-nitropropane, and the anionic forms ethylnitronate, propyl-1-nitronate, and propyl-2-nitronate. Has no azoreductase activity since it is not able to reduce the azo dye methyl red with NADH. May be required to maintain an appropriate [NAD(+)]/[NADH] ratio for the catabolism of fatty acids in P.aeruginosa PAO1. This chain is NADH:quinone reductase, found in Pseudomonas aeruginosa (strain ATCC 15692 / DSM 22644 / CIP 104116 / JCM 14847 / LMG 12228 / 1C / PRS 101 / PAO1).